An 84-amino-acid chain; its full sequence is MAHKKAGGSTRNGRDSESKRLGVKRFGGESVLAGNIIVRQRGTKFHAGVNVGIGRDHTLFALTDGKVKFQVKGPNNRKFISIEA.

Residues 1-22 (MAHKKAGGSTRNGRDSESKRLG) are disordered.

It belongs to the bacterial ribosomal protein bL27 family.

The sequence is that of Large ribosomal subunit protein bL27 from Shewanella frigidimarina (strain NCIMB 400).